The primary structure comprises 243 residues: Pyridoxine 5'-phosphate synthase (243 aa).

N9 provides a ligand contact to 3-amino-2-oxopropyl phosphate. 11–12 (DH) is a 1-deoxy-D-xylulose 5-phosphate binding site. R20 provides a ligand contact to 3-amino-2-oxopropyl phosphate. Catalysis depends on H45, which acts as the Proton acceptor. 1-deoxy-D-xylulose 5-phosphate contacts are provided by R47 and H52. Catalysis depends on E72, which acts as the Proton acceptor. T102 provides a ligand contact to 1-deoxy-D-xylulose 5-phosphate. H193 acts as the Proton donor in catalysis. Residues G194 and 215–216 (GH) each bind 3-amino-2-oxopropyl phosphate.

This sequence belongs to the PNP synthase family. In terms of assembly, homooctamer; tetramer of dimers.

The protein resides in the cytoplasm. The catalysed reaction is 3-amino-2-oxopropyl phosphate + 1-deoxy-D-xylulose 5-phosphate = pyridoxine 5'-phosphate + phosphate + 2 H2O + H(+). It participates in cofactor biosynthesis; pyridoxine 5'-phosphate biosynthesis; pyridoxine 5'-phosphate from D-erythrose 4-phosphate: step 5/5. Catalyzes the complicated ring closure reaction between the two acyclic compounds 1-deoxy-D-xylulose-5-phosphate (DXP) and 3-amino-2-oxopropyl phosphate (1-amino-acetone-3-phosphate or AAP) to form pyridoxine 5'-phosphate (PNP) and inorganic phosphate. The chain is Pyridoxine 5'-phosphate synthase from Photobacterium profundum (strain SS9).